We begin with the raw amino-acid sequence, 429 residues long: Probable exoglucanase GH6D (429 aa).

An N-terminal signal peptide occupies residues 1-17 (MRAVYAILAGLLATGSA). 2 residues coordinate substrate: W75 and S77. Active-site proton donor residues include D115 and D162. N206 and W209 together coordinate substrate. The N-linked (GlcNAc...) asparagine glycan is linked to N237. N240, W300, K328, and E332 together coordinate substrate. The disordered stretch occupies residues 240–261 (NYNPYSTNNPPPYTAGSPSADE). A disordered region spans residues 362–390 (PEIRADGGGGGSPAPGPSSTAVAPSPSAT). Residues 378–390 (PSSTAVAPSPSAT) show a composition bias toward low complexity. Residues 394–429 (NCAARWAQCGGQGWTGPTCCAQGTCQASNQWYSQCL) form the CBM1 domain.

The protein belongs to the glycosyl hydrolase 6 (cellulase B) family.

It is found in the secreted. Its function is as follows. Probable exoglucanase that may play an important function in biomass degradation by catalyzing the hydrolysis of cellulose. The protein is Probable exoglucanase GH6D of Podospora anserina (strain S / ATCC MYA-4624 / DSM 980 / FGSC 10383) (Pleurage anserina).